Here is a 123-residue protein sequence, read N- to C-terminus: Small ribosomal subunit protein uS12 (123 aa).

The interval methionine 1–threonine 21 is disordered. The span at arginine 9–lysine 20 shows a compositional bias: basic residues. A 3-methylthioaspartic acid modification is found at aspartate 89.

Belongs to the universal ribosomal protein uS12 family. As to quaternary structure, part of the 30S ribosomal subunit. Contacts proteins S8 and S17. May interact with IF1 in the 30S initiation complex.

With S4 and S5 plays an important role in translational accuracy. In terms of biological role, interacts with and stabilizes bases of the 16S rRNA that are involved in tRNA selection in the A site and with the mRNA backbone. Located at the interface of the 30S and 50S subunits, it traverses the body of the 30S subunit contacting proteins on the other side and probably holding the rRNA structure together. The combined cluster of proteins S8, S12 and S17 appears to hold together the shoulder and platform of the 30S subunit. The chain is Small ribosomal subunit protein uS12 from Bifidobacterium longum subsp. infantis (strain ATCC 15697 / DSM 20088 / JCM 1222 / NCTC 11817 / S12).